The primary structure comprises 200 residues: Large ribosomal subunit protein uL22c (200 aa).

It belongs to the universal ribosomal protein uL22 family. Part of the 50S ribosomal subunit.

The protein resides in the plastid. It localises to the chloroplast. Functionally, this protein binds specifically to 23S rRNA. Its function is as follows. The globular domain of the protein is located near the polypeptide exit tunnel on the outside of the subunit, while an extended beta-hairpin is found that lines the wall of the exit tunnel in the center of the 70S ribosome. This Medicago sativa (Alfalfa) protein is Large ribosomal subunit protein uL22c (rpl22).